The primary structure comprises 315 residues: uncharacterized protein (315 aa).

The next 3 helical transmembrane spans lie at 18-38 (IWFI…IISG), 202-222 (ILAI…LAGI), and 244-264 (LIYA…VIVL). A disordered region spans residues 288 to 315 (VCSTGNRSSGSTDQDISTTKQQSQEAVA).

It localises to the membrane. This is an uncharacterized protein from Saccharomyces cerevisiae (strain ATCC 204508 / S288c) (Baker's yeast).